The following is a 211-amino-acid chain: Small ribosomal subunit protein uS3 (211 aa).

The KH type-2 domain maps to Leu38–Lys106.

This sequence belongs to the universal ribosomal protein uS3 family. In terms of assembly, part of the 30S ribosomal subunit. Forms a tight complex with proteins S10 and S14.

Functionally, binds the lower part of the 30S subunit head. Binds mRNA in the 70S ribosome, positioning it for translation. The chain is Small ribosomal subunit protein uS3 from Ehrlichia ruminantium (strain Welgevonden).